We begin with the raw amino-acid sequence, 317 residues long: Homoserine kinase (317 aa).

Residue 95-105 (PHSRGLGSSAA) participates in ATP binding.

It belongs to the GHMP kinase family. Homoserine kinase subfamily.

The protein localises to the cytoplasm. The enzyme catalyses L-homoserine + ATP = O-phospho-L-homoserine + ADP + H(+). The protein operates within amino-acid biosynthesis; L-threonine biosynthesis; L-threonine from L-aspartate: step 4/5. Functionally, catalyzes the ATP-dependent phosphorylation of L-homoserine to L-homoserine phosphate. The sequence is that of Homoserine kinase from Mycolicibacterium smegmatis (strain ATCC 700084 / mc(2)155) (Mycobacterium smegmatis).